We begin with the raw amino-acid sequence, 304 residues long: UDP-3-O-acyl-N-acetylglucosamine deacetylase (304 aa).

Zn(2+) contacts are provided by His78, His237, and Asp241. The active-site Proton donor is the His264.

It belongs to the LpxC family. Zn(2+) serves as cofactor.

It catalyses the reaction a UDP-3-O-[(3R)-3-hydroxyacyl]-N-acetyl-alpha-D-glucosamine + H2O = a UDP-3-O-[(3R)-3-hydroxyacyl]-alpha-D-glucosamine + acetate. The protein operates within glycolipid biosynthesis; lipid IV(A) biosynthesis; lipid IV(A) from (3R)-3-hydroxytetradecanoyl-[acyl-carrier-protein] and UDP-N-acetyl-alpha-D-glucosamine: step 2/6. Functionally, catalyzes the hydrolysis of UDP-3-O-myristoyl-N-acetylglucosamine to form UDP-3-O-myristoylglucosamine and acetate, the committed step in lipid A biosynthesis. This is UDP-3-O-acyl-N-acetylglucosamine deacetylase from Marinobacter nauticus (strain ATCC 700491 / DSM 11845 / VT8) (Marinobacter aquaeolei).